A 94-amino-acid polypeptide reads, in one-letter code: Probable Fe(2+)-trafficking protein (94 aa).

The protein belongs to the Fe(2+)-trafficking protein family.

Could be a mediator in iron transactions between iron acquisition and iron-requiring processes, such as synthesis and/or repair of Fe-S clusters in biosynthetic enzymes. In Alcanivorax borkumensis (strain ATCC 700651 / DSM 11573 / NCIMB 13689 / SK2), this protein is Probable Fe(2+)-trafficking protein.